A 387-amino-acid chain; its full sequence is 8-amino-7-oxononanoate synthase (387 aa).

Residue Arg-19 participates in substrate binding. Gly-106 to Tyr-107 lines the pyridoxal 5'-phosphate pocket. His-131 lines the substrate pocket. 3 residues coordinate pyridoxal 5'-phosphate: Ser-177, His-205, and Thr-236. Lys-239 is modified (N6-(pyridoxal phosphate)lysine). Thr-353 is a binding site for substrate.

The protein belongs to the class-II pyridoxal-phosphate-dependent aminotransferase family. BioF subfamily. In terms of assembly, homodimer. It depends on pyridoxal 5'-phosphate as a cofactor.

The catalysed reaction is 6-carboxyhexanoyl-[ACP] + L-alanine + H(+) = (8S)-8-amino-7-oxononanoate + holo-[ACP] + CO2. The protein operates within cofactor biosynthesis; biotin biosynthesis. Functionally, catalyzes the decarboxylative condensation of pimeloyl-[acyl-carrier protein] and L-alanine to produce 8-amino-7-oxononanoate (AON), [acyl-carrier protein], and carbon dioxide. The sequence is that of 8-amino-7-oxononanoate synthase from Nitrosomonas eutropha (strain DSM 101675 / C91 / Nm57).